A 304-amino-acid polypeptide reads, in one-letter code: UDP-N-acetylenolpyruvoylglucosamine reductase (304 aa).

The FAD-binding PCMH-type domain maps to 33 to 198 (KVGGPVDILL…LEVTFNLEKG (166 aa)). Arginine 177 is an active-site residue. Residue serine 227 is the Proton donor of the active site. Glutamate 297 is an active-site residue.

The protein belongs to the MurB family. FAD serves as cofactor.

The protein resides in the cytoplasm. It carries out the reaction UDP-N-acetyl-alpha-D-muramate + NADP(+) = UDP-N-acetyl-3-O-(1-carboxyvinyl)-alpha-D-glucosamine + NADPH + H(+). Its pathway is cell wall biogenesis; peptidoglycan biosynthesis. Cell wall formation. This chain is UDP-N-acetylenolpyruvoylglucosamine reductase, found in Clostridium kluyveri (strain NBRC 12016).